Here is a 488-residue protein sequence, read N- to C-terminus: MESRSKVKTYGKNRRYINKDIEIWASLDERPCALKPRNIENFNNQERSDLEHIHSKPKKDSLLSWNILLKKGSYKENELLAKRNQNLVPTVIIPASPRDNASKSVVSKKEVVNLSSSVALSGKPANNSKLDPLHRLLQIVAQEDALPFSQFVKSQTFEIQKIGEASYSEVYQASNADDVPVVWKVIPFGEDGQAQYADVLNEVQISQWIKVDGFANLHQVVVVKGTYPSLLLEEWDRYLMQNGSENDRPDSYSSTQLYCVLCLDHSGTDLEHFELRSWRECWSVFYETLKILSLVETRYEFEHRDLHWGNILIRKADRSEEEVSFLLNEISLDDIESVDFPGSQDKADDFDNILQVTLIDFTLARASYSQGIISYNEFNDPDLFNGVDDYQFDIYRLMSRVTKGRWAQFFPITNVLWLHYLIHQLLHKKNLSSPLTETETLMRSRLKQIFRLIDPVKTMQFQQAEDSIRSKSTVTSATSLLNWVRQKY.

The region spanning 156 to 488 (TFEIQKIGEA…SLLNWVRQKY (333 aa)) is the Protein kinase domain. Residues 162–170 (IGEASYSEV) and Lys184 each bind ATP. The active-site Proton acceptor is Asp305.

Belongs to the protein kinase superfamily. Ser/Thr protein kinase family. Haspin subfamily. As to quaternary structure, interacts with pds5 and swi6.

Its subcellular location is the cytoplasm. The protein localises to the chromosome. It carries out the reaction L-seryl-[protein] + ATP = O-phospho-L-seryl-[protein] + ADP + H(+). The catalysed reaction is L-threonyl-[protein] + ATP = O-phospho-L-threonyl-[protein] + ADP + H(+). Functionally, serine/threonine haspin-like protein kinase involved in cell cycle regulation. Acts in chromosomal passenger complex (CPC) targeting to centromeres by phosphorylating histone H3 at 'Thr3' (H3T3ph). The protein is Serine/threonine-protein kinase haspin homolog hrk1 (hrk1) of Schizosaccharomyces pombe (strain 972 / ATCC 24843) (Fission yeast).